A 278-amino-acid chain; its full sequence is Undecaprenyl-diphosphatase (278 aa).

8 helical membrane passes run 14-34, 40-60, 89-109, 121-141, 153-173, 196-216, 227-247, and 257-277; these read GTTEFLPISSSAHLIVLPWLF, GLAFNVALHLGTLSAVLAYFW, WAVIIGSLPAGLAGFFLNDVI, TAIVFTSLLLIVLGFVLWLAE, LGLRDGLVVGLAQALALLPGV, FSFILGIPAIAGAGLLETLKL, VLFVTGVASAAITGFLAIAFL, and SIFIVYRIALGLVLLLVVSFA.

This sequence belongs to the UppP family.

It is found in the cell membrane. It catalyses the reaction di-trans,octa-cis-undecaprenyl diphosphate + H2O = di-trans,octa-cis-undecaprenyl phosphate + phosphate + H(+). Its function is as follows. Catalyzes the dephosphorylation of undecaprenyl diphosphate (UPP). Confers resistance to bacitracin. This Thermomicrobium roseum (strain ATCC 27502 / DSM 5159 / P-2) protein is Undecaprenyl-diphosphatase.